The sequence spans 432 residues: Short/branched chain specific acyl-CoA dehydrogenase, mitochondrial (432 aa).

The N-terminal 33 residues, 1-33, are a transit peptide targeting the mitochondrion; that stretch reads MEGLAVRLLRGSRLLRRNFLTCLSSWKIPPHVS. Position 70 is an N6-acetyllysine; alternate (Lys70). N6-succinyllysine; alternate is present on Lys70. FAD is bound by residues 174–183 and 207–209; these read FCLSEAGAGS and WIS. Position 183 (Ser183) interacts with substrate. Phosphoserine is present on Ser183. Substrate-binding residues include Tyr229 and Tyr283. Lys284 carries the post-translational modification N6-acetyllysine; alternate. At Lys284 the chain carries N6-succinyllysine; alternate. 291–294 contacts substrate; sequence NEGR. FAD-binding positions include Arg319, Gln330, and 387 to 391; that span reads EWMGG. The active-site Proton acceptor is Glu414. 416 to 418 contributes to the FAD binding site; the sequence is ASN. Lys426 carries the N6-acetyllysine modification.

The protein belongs to the acyl-CoA dehydrogenase family. As to quaternary structure, homotetramer. It depends on FAD as a cofactor. Ubiquitously expressed.

Its subcellular location is the mitochondrion matrix. It catalyses the reaction 2-methylbutanoyl-CoA + oxidized [electron-transfer flavoprotein] + H(+) = (2E)-2-methylbut-2-enoyl-CoA + reduced [electron-transfer flavoprotein]. It carries out the reaction (2S)-2-methylbutanoyl-CoA + oxidized [electron-transfer flavoprotein] + H(+) = (2E)-2-methylbut-2-enoyl-CoA + reduced [electron-transfer flavoprotein]. The enzyme catalyses (2R)-2-methylbutanoyl-CoA + oxidized [electron-transfer flavoprotein] + H(+) = ethylacryloyl-CoA + reduced [electron-transfer flavoprotein]. The catalysed reaction is butanoyl-CoA + oxidized [electron-transfer flavoprotein] + H(+) = (2E)-butenoyl-CoA + reduced [electron-transfer flavoprotein]. It catalyses the reaction 2-methylpropanoyl-CoA + oxidized [electron-transfer flavoprotein] + H(+) = 2-methylpropenoyl-CoA + reduced [electron-transfer flavoprotein]. It carries out the reaction hexanoyl-CoA + oxidized [electron-transfer flavoprotein] + H(+) = (2E)-hexenoyl-CoA + reduced [electron-transfer flavoprotein]. The enzyme catalyses 2-methylhexanoyl-CoA + oxidized [electron-transfer flavoprotein] + H(+) = 2-methylhexenoyl-CoA + reduced [electron-transfer flavoprotein]. The catalysed reaction is valproyl-CoA + oxidized [electron-transfer flavoprotein] + H(+) = (2E)-2-propylpent-2-enoyl-CoA + reduced [electron-transfer flavoprotein]. It functions in the pathway lipid metabolism; mitochondrial fatty acid beta-oxidation. The protein operates within amino-acid degradation; L-isoleucine degradation. Its activity is regulated as follows. Competitively inhibited by valproyl-CoA. Its function is as follows. Short and branched chain specific acyl-CoA dehydrogenase that catalyzes the removal of one hydrogen from C-2 and C-3 of the fatty acyl-CoA thioester, resulting in the formation of trans-2-enoyl-CoA. Among the different mitochondrial acyl-CoA dehydrogenases, acts specifically on short and branched chain acyl-CoA derivatives such as (S)-2-methylbutyryl-CoA as well as short straight chain acyl-CoAs such as butyryl-CoA. Plays an important role in the metabolism of L-isoleucine by catalyzing the dehydrogenation of 2-methylbutyryl-CoA, one of the steps of the L-isoleucine catabolic pathway. Can also act on valproyl-CoA, a metabolite of valproic acid, an antiepileptic drug. This is Short/branched chain specific acyl-CoA dehydrogenase, mitochondrial from Homo sapiens (Human).